Here is a 300-residue protein sequence, read N- to C-terminus: Epimerase family protein SACOL0834 (300 aa).

It belongs to the NAD(P)-dependent epimerase/dehydratase family. SDR39U1 subfamily.

This Staphylococcus aureus (strain COL) protein is Epimerase family protein SACOL0834.